We begin with the raw amino-acid sequence, 1150 residues long: Solute carrier family 12 member 6 (1150 aa).

At methionine 1–leucine 135 the chain is on the cytoplasmic side. A disordered region spans residues threonine 20–alanine 66. The span at leucine 28 to phenylalanine 45 shows a compositional bias: low complexity. 2 positions are modified to phosphoserine: serine 32 and serine 120. A discontinuously helical membrane pass occupies residues phenylalanine 136–asparagine 158. Residues serine 147 and serine 148 each contribute to the K(+) site. Position 148 is a phosphoserine (serine 148). A chloride-binding site is contributed by asparagine 151. At leucine 159–glutamate 165 the chain is on the extracellular side. Positions glutamine 161 to lysine 181 are disordered. Over residues alanine 163–lysine 177 the composition is skewed to basic and acidic residues. A helical membrane pass occupies residues histidine 166–phenylalanine 188. Over methionine 189–valine 211 the chain is Cytoplasmic. The chain crosses the membrane as a helical span at residues valine 212–glycine 245. Residues valine 246–glutamate 263 lie on the Extracellular side of the membrane. Helical transmembrane passes span phenylalanine 264 to alanine 287 and isoleucine 288 to asparagine 316. Topologically, residues asparagine 317–glutamine 433 are extracellular. Cysteine 375 and cysteine 390 form a disulfide bridge. Asparagine 379, asparagine 398, asparagine 411, and asparagine 428 each carry an N-linked (GlcNAc...) asparagine glycan. Cysteine 410 and cysteine 420 are oxidised to a cystine. A helical membrane pass occupies residues glycine 434–lysine 454. K(+) is bound by residues isoleucine 443, threonine 444, and asparagine 446. Chloride is bound by residues isoleucine 443 and threonine 444. Chloride contacts are provided by leucine 447 and tryptophan 448. At glycine 455 to lysine 464 the chain is on the cytoplasmic side. A helical membrane pass occupies residues serine 465 to leucine 487. The Extracellular segment spans residues leucine 488–isoleucine 518. Residues glycine 519 to valine 545 traverse the membrane as a helical segment. Residues valine 546 to serine 568 lie on the Cytoplasmic side of the membrane. Helical transmembrane passes span proline 569 to threonine 589 and glycine 590 to histidine 612. Isoleucine 603 contacts chloride. The Cytoplasmic segment spans residues serine 613–isoleucine 629. Helical transmembrane passes span alanine 630–phenylalanine 649 and phenylalanine 650–threonine 665. Residues leucine 666 to serine 1150 are Cytoplasmic-facing. Residues alanine 682–cysteine 691 are scissor helix. Position 736 is a phosphoserine (serine 736). Threonine 778 carries the phosphothreonine modification. Serine 981 is subject to Phosphoserine. Threonine 991 carries the post-translational modification Phosphothreonine; by OXSR1 and STK39. Phosphoserine is present on residues serine 1023, serine 1029, and serine 1032. A Phosphothreonine; by OXSR1 and STK39 modification is found at threonine 1048. Tyrosine 1121 is modified (phosphotyrosine). The tract at residues glutamate 1133 to serine 1150 is interaction with CKB.

It belongs to the SLC12A transporter family. K/Cl co-transporter subfamily. Homodimer; adopts a domain-swap conformation at the scissor helices connecting the transmembrane domain and C-terminal domain. Heterodimer with K-Cl cotransporter SLC12A5. Interacts (via C-terminus) with CKB; the interaction may be required for potassium-chloride cotransport activity. Post-translationally, phosphorylated, phosphorylation regulates transporter activity. Phosphorylated at Thr-991 and Thr-1048 by OXSR1/OSR1 and STK39/SPAK downstream of WNK kinases (WNK1, WNK2, WNK3 or WNK4), inhibiting the potassium-chloride cotransport activity. N-glycosylated. Expressed in brain (at protein level). Highly expressed in heart, brain and kidney. Detected at lower levels in skeletal muscle, placenta, lung and pancreas. Detected in umbilical vein endothelial cells. As to expression, more abundant in kidney. In terms of tissue distribution, testis specific.

Its subcellular location is the cell membrane. The protein resides in the basolateral cell membrane. The catalysed reaction is K(+)(in) + chloride(in) = K(+)(out) + chloride(out). Its activity is regulated as follows. Inhibited following phosphorylation by OXSR1/OSR1 and STK39/SPAK: phosphorylation takes place downstream of WNK kinases (WNK1, WNK2, WNK3 or WNK4) in response to hyperosmotic stress and subsequent cell shrinkage. Activated by N-ethylmaleimide (NEM). Inhibited by DIOA, bumetanide and furosemide. Mediates electroneutral potassium-chloride cotransport when activated by cell swelling. May contribute to cell volume homeostasis in single cells. Functionally, mediates electroneutral potassium-chloride cotransport when activated by cell swelling. May contribute to cell volume homeostasis in single cells. Its function is as follows. Mediates electroneutral potassium-chloride cotransport when activated by cell swelling. May contribute to cell volume homeostasis in single cells. The protein is Solute carrier family 12 member 6 of Homo sapiens (Human).